The primary structure comprises 59 residues: UPF0434 protein PMI0721 (59 aa).

This sequence belongs to the UPF0434 family.

The chain is UPF0434 protein PMI0721 from Proteus mirabilis (strain HI4320).